The primary structure comprises 549 residues: Glucose-6-phosphate isomerase (549 aa).

E353 (proton donor) is an active-site residue. Residues H384 and K513 contribute to the active site.

It belongs to the GPI family.

The protein resides in the cytoplasm. It catalyses the reaction alpha-D-glucose 6-phosphate = beta-D-fructose 6-phosphate. The protein operates within carbohydrate biosynthesis; gluconeogenesis. It functions in the pathway carbohydrate degradation; glycolysis; D-glyceraldehyde 3-phosphate and glycerone phosphate from D-glucose: step 2/4. In terms of biological role, catalyzes the reversible isomerization of glucose-6-phosphate to fructose-6-phosphate. In Brucella melitensis biotype 2 (strain ATCC 23457), this protein is Glucose-6-phosphate isomerase.